We begin with the raw amino-acid sequence, 493 residues long: Leucine-rich repeat-containing protein 14 (493 aa).

One copy of the LRR 1; degenerate repeat lies at 111–146; the sequence is KHTLRVLDMTGLLDDGVEQDPGTMSMWDCTAAVART. The LRR 2; degenerate repeat unit spans residues 194 to 218; that stretch reads RLCCRDLRAEDLPMRNTVALLQLLD. The LRR 3; degenerate repeat unit spans residues 219 to 246; it reads AGCLRRIDLRFNNLGLRGLSVIIPHVAR. One copy of the LRR 4; degenerate repeat lies at 247–282; it reads FQHLASLRLHYVHGDSRQPSVDGEDNFRYFLAQMGR. LRR repeat units follow at residues 283-307, 308-339, 340-360, 364-391, and 392-416; these read FICL…LSTL, QRPL…AHLK, KLDL…QGLL, AATL…TLTR, and CASL…LLRD.

The protein belongs to the PRAME family. LRRC14 subfamily. As to quaternary structure, interacts with IKBKB; disrupts IKBKB-IKBKG interaction preventing I-kappa-B-kinase (IKK) core complex formation and leading to a decrease of IKBKB phosphorylation and NF-kappaB activation. Interacts with CHUK.

The protein localises to the cytoplasm. In terms of biological role, negatively regulates Toll-like receptor-mediated NF-kappa-B signaling by disrupting IKK core complex formation through interaction with IKBKB. This chain is Leucine-rich repeat-containing protein 14, found in Rattus norvegicus (Rat).